We begin with the raw amino-acid sequence, 1610 residues long: NHS-like protein 1 (1610 aa).

A Phosphoserine modification is found at Ser-24. Positions 145-169 (SPFCDDYQDEDEETDQKCSLSSSEE) are disordered. 2 positions are modified to phosphoserine: Ser-198 and Ser-328. Over residues 433–448 (TAQSAGQRESKSSGSS) the composition is skewed to polar residues. Disordered stretches follow at residues 433-477 (TAQS…HWNE) and 531-602 (PAHP…DAGS). Ser-568 carries the phosphoserine modification. The span at 578-594 (GYSTPTSNMSSCSLDQT) shows a compositional bias: polar residues. Ser-639 is modified (phosphoserine). A compositionally biased stretch (polar residues) spans 649–667 (QKNQGDRSNYQDKSLSRNI). Disordered regions lie at residues 649-693 (QKNQ…KKSS), 715-778 (SLPG…SVKS), 791-981 (TGMQ…PPPE), 997-1535 (PRPA…GEGE), and 1566-1610 (EGGL…SEES). The segment covering 715–730 (SLPGKSGSSPSQSPCS) has biased composition (low complexity). 3 stretches are compositionally biased toward polar residues: residues 740-760 (SRSQSTVSAGSSMTSATTPNV), 767-778 (TPSQSDTSSVKS), and 851-865 (SPSSGYSSQSNTPTA). Positions 895–928 (SLISSVSISSSSTSLSSSTSTEGSGTMKKLDPAV) are enriched in low complexity. Pro residues-rich tracts occupy residues 929–946 (GSPPAPPPPPVPSPPFPC) and 970–981 (PHSPVFPPPPPE). Over residues 1001-1011 (LSPILPDSPVS) the composition is skewed to low complexity. Over residues 1012–1031 (LPLPPPLLPSSEPPPAPPLD) the composition is skewed to pro residues. Residues 1041–1053 (PFTNSGQPESSRG) are compositionally biased toward polar residues. Phosphoserine is present on Ser-1089. Positions 1122–1153 (SRNSTNEMESESQPASVTSSLPTPAKSSSQGD) are enriched in polar residues. The residue at position 1167 (Ser-1167) is a Phosphoserine. Residues 1180–1193 (PSPSTTPLPDSSPS) are compositionally biased toward low complexity. Ser-1233 bears the Phosphoserine mark. 2 stretches are compositionally biased toward basic and acidic residues: residues 1240–1249 (GSVHSREAKE) and 1373–1383 (GRRDSDDDHSR). Residues Ser-1386 and Ser-1388 each carry the phosphoserine modification. At Thr-1392 the chain carries Phosphothreonine. A compositionally biased stretch (polar residues) spans 1405-1422 (QVGSIQRSIRKSSTSSDN). Residues 1447-1460 (KNTDPRFQRSRSEP) show a composition bias toward basic and acidic residues. Low complexity-rich tracts occupy residues 1461-1474 (SPDAPESPSSCSPS) and 1504-1516 (SRTPPSAASSRYS).

Belongs to the NHS family. As to expression, widely expressed. Expressed in adult and fetal brain, fetal eyes, adult lens, kidney, liver and intestine.

This Homo sapiens (Human) protein is NHS-like protein 1 (NHSL1).